Consider the following 700-residue polypeptide: UvrABC system protein B (700 aa).

The Helicase ATP-binding domain occupies 26 to 183 (SGLHRGDRIQ…RALVGIQYLR (158 aa)). 39–46 (GVTGSGKT) is a binding site for ATP. The Beta-hairpin motif lies at 92-115 (YYDYYQPEAYVPSSDTYIEKDASI). The Helicase C-terminal domain maps to 430–596 (QVDDLLHEIR…GVTKSVDEVR (167 aa)). The tract at residues 608-627 (REGEAPAPRRLASESAPRSR) is disordered. The UVR domain occupies 631 to 666 (ETLVGELEIAMREAAVALDFEAAARLRDQLFEVRTA). Positions 667–700 (LGQAPSEARGNAQAPKRPPGSAPQRRAGGGRRGR) are disordered.

Belongs to the UvrB family. Forms a heterotetramer with UvrA during the search for lesions. Interacts with UvrC in an incision complex.

It is found in the cytoplasm. Its function is as follows. The UvrABC repair system catalyzes the recognition and processing of DNA lesions. A damage recognition complex composed of 2 UvrA and 2 UvrB subunits scans DNA for abnormalities. Upon binding of the UvrA(2)B(2) complex to a putative damaged site, the DNA wraps around one UvrB monomer. DNA wrap is dependent on ATP binding by UvrB and probably causes local melting of the DNA helix, facilitating insertion of UvrB beta-hairpin between the DNA strands. Then UvrB probes one DNA strand for the presence of a lesion. If a lesion is found the UvrA subunits dissociate and the UvrB-DNA preincision complex is formed. This complex is subsequently bound by UvrC and the second UvrB is released. If no lesion is found, the DNA wraps around the other UvrB subunit that will check the other stand for damage. The protein is UvrABC system protein B of Gemmatimonas aurantiaca (strain DSM 14586 / JCM 11422 / NBRC 100505 / T-27).